Reading from the N-terminus, the 157-residue chain is XylDLEGF operon transcriptional activator 2 (157 aa).

An HTH araC/xylS-type domain is found at 39–140 (ERVVQFIEEN…GELPSDTLSL (102 aa)). 2 DNA-binding regions (H-T-H motif) span residues 56 to 77 (EQLA…EKHT) and 107 to 130 (ITEV…RSTF).

Its subcellular location is the cytoplasm. Its function is as follows. Regulatory protein of the TOL plasmid xyl operons. XylS activates the xylXYZLTEGFJQKIH operon required for the degradation of toluene, m-xylene and p-xylene. This chain is XylDLEGF operon transcriptional activator 2 (xylS2), found in Pseudomonas putida (Arthrobacter siderocapsulatus).